Reading from the N-terminus, the 354-residue chain is Heme A synthase (354 aa).

Transmembrane regions (helical) follow at residues 21–41 (VAVWLLACCFMVAVMVLLGGL), 106–126 (VWGRLIGVVFGLPFLWLALSG), 139–159 (VFLLGAAQGGMGWFMVKSGLV), 171–191 (AHLALAFLIHGWMFWLALDIL), 212–232 (MLGLTGLVIVTLLFGGLVAGL), 268–288 (VQFGHRTLAEITIVVALVGWF), 304–324 (AVGLMALLQVGLGIGTLVMVV), and 326–346 (VWLASAHQMGAMALLTLCLWA). Position 272 (histidine 272) interacts with heme. Histidine 332 serves as a coordination point for heme.

Belongs to the COX15/CtaA family. Type 2 subfamily. As to quaternary structure, interacts with CtaB. The cofactor is heme b.

The protein resides in the cell membrane. It catalyses the reaction Fe(II)-heme o + 2 A + H2O = Fe(II)-heme a + 2 AH2. The protein operates within porphyrin-containing compound metabolism; heme A biosynthesis; heme A from heme O: step 1/1. Its function is as follows. Catalyzes the conversion of heme O to heme A by two successive hydroxylations of the methyl group at C8. The first hydroxylation forms heme I, the second hydroxylation results in an unstable dihydroxymethyl group, which spontaneously dehydrates, resulting in the formyl group of heme A. This chain is Heme A synthase, found in Paramagnetospirillum magneticum (strain ATCC 700264 / AMB-1) (Magnetospirillum magneticum).